A 104-amino-acid chain; its full sequence is uncharacterized protein (104 aa).

The region spanning 3-104 is the HIT domain; that stretch reads VFEKIIQGEI…HFHILSGDKH (102 aa). Residues 93–97 carry the Histidine triad motif motif; the sequence is HLHFH.

This is an uncharacterized protein from Helicobacter pylori (strain J99 / ATCC 700824) (Campylobacter pylori J99).